The chain runs to 383 residues: Succinyl-diaminopimelate desuccinylase (383 aa).

H73 serves as a coordination point for Zn(2+). D75 is an active-site residue. D107 contacts Zn(2+). E141 functions as the Proton acceptor in the catalytic mechanism. The Zn(2+) site is built by E142, E170, and H356.

This sequence belongs to the peptidase M20A family. DapE subfamily. As to quaternary structure, homodimer. It depends on Zn(2+) as a cofactor. The cofactor is Co(2+).

The enzyme catalyses N-succinyl-(2S,6S)-2,6-diaminopimelate + H2O = (2S,6S)-2,6-diaminopimelate + succinate. It functions in the pathway amino-acid biosynthesis; L-lysine biosynthesis via DAP pathway; LL-2,6-diaminopimelate from (S)-tetrahydrodipicolinate (succinylase route): step 3/3. Its function is as follows. Catalyzes the hydrolysis of N-succinyl-L,L-diaminopimelic acid (SDAP), forming succinate and LL-2,6-diaminopimelate (DAP), an intermediate involved in the bacterial biosynthesis of lysine and meso-diaminopimelic acid, an essential component of bacterial cell walls. This chain is Succinyl-diaminopimelate desuccinylase, found in Pseudomonas putida (strain GB-1).